Here is a 1171-residue protein sequence, read N- to C-terminus: APC-related protein 1 (1171 aa).

The interval 1 to 54 is disordered; that stretch reads MSSSSSDENETTIHSSSNPGSSGIYSQLKAGSSKRPSVRHDVSDAEDDEEPYEG. The segment at 1–481 is required for interaction with bar-1 and hmp-2; that stretch reads MSSSSSDENE…LSLRATRASP (481 aa). A compositionally biased stretch (low complexity) spans 15-26; it reads SSSNPGSSGIYS. An ARM repeat occupies 312–356; the sequence is NCLKVLANILSPDARFTTLVDSASGILKYVSQYLATNSSHLELRS. Disordered regions lie at residues 587–617, 662–699, 720–741, 767–822, 837–936, and 995–1030; these read PVDD…NPGS, HPED…GTTV, RKTS…LEVE, EEMP…EMTT, PRSR…TMRI, and SSGS…SSLP. Residues 591–1171 are required for interaction with pry-1; that stretch reads DLDIPTSTVM…NPKQMLVTIV (581 aa). Polar residues-rich tracts occupy residues 595–617 and 666–697; these read PTST…NPGS and NQMT…SDGT. The span at 788 to 799 shows a compositional bias: polar residues; sequence FSPSQKTTSSPA. Residues 857–874 show a composition bias toward basic and acidic residues; it reads EPDRSSHSKNEEADRRDA. 2 stretches are compositionally biased toward polar residues: residues 890-913 and 1002-1028; these read RGSS…SSED and LQKA…SVSS.

This sequence belongs to the adenomatous polyposis coli (APC) family. In terms of assembly, interacts (via N-terminus) with bar-1 and hmp-2; the interaction with hmp-2 is relatively weak. Interacts (via C-terminus) with pry-1 (via N-terminus). Probably associates with bar-1, gsk-3, pry-1 in a complex.

It is found in the cell junction. It localises to the adherens junction. The protein resides in the cytoplasm. The protein localises to the nucleus. In terms of biological role, has a role in endoderm cell specification and pharyngeal development. Required for the migration of epithelial cells, organization of the anterior seam cells and ceh-13 expression during embryo morphogenesis. Prevents hyperactivation of the Wnt signaling pathway during endoderm development, probably by preventing hmp-2 nuclear translocation. During larval development, apr-1 is required for expression of lin-39 in P3-8.p. Shown to negatively regulate Wnt signaling in vulval precursor cells. Has a role in cell division by establishing the polarity of the mother cell which forms the asymmetries of the daughter nuclei. Thought to regulate export of wrm-1 from the nucleus possibly as part of a complex involving pry-1. This is APC-related protein 1 from Caenorhabditis briggsae.